A 147-amino-acid chain; its full sequence is D-aminoacyl-tRNA deacylase (147 aa).

The Gly-cisPro motif, important for rejection of L-amino acids motif lies at 136–137 (GP).

It belongs to the DTD family. Homodimer.

The protein resides in the cytoplasm. The catalysed reaction is glycyl-tRNA(Ala) + H2O = tRNA(Ala) + glycine + H(+). The enzyme catalyses a D-aminoacyl-tRNA + H2O = a tRNA + a D-alpha-amino acid + H(+). Its function is as follows. An aminoacyl-tRNA editing enzyme that deacylates mischarged D-aminoacyl-tRNAs. Also deacylates mischarged glycyl-tRNA(Ala), protecting cells against glycine mischarging by AlaRS. Acts via tRNA-based rather than protein-based catalysis; rejects L-amino acids rather than detecting D-amino acids in the active site. By recycling D-aminoacyl-tRNA to D-amino acids and free tRNA molecules, this enzyme counteracts the toxicity associated with the formation of D-aminoacyl-tRNA entities in vivo and helps enforce protein L-homochirality. The chain is D-aminoacyl-tRNA deacylase from Persephonella marina (strain DSM 14350 / EX-H1).